The sequence spans 90 residues: Small ribosomal subunit protein uS15c (90 aa).

The protein belongs to the universal ribosomal protein uS15 family. Part of the 30S ribosomal subunit.

The protein resides in the plastid. The protein localises to the chloroplast. In Manihot esculenta (Cassava), this protein is Small ribosomal subunit protein uS15c (rps15).